Here is a 263-residue protein sequence, read N- to C-terminus: Small ribosomal subunit protein uS3 (263 aa).

The KH type-2 domain occupies 40–108; sequence IRNYLFKKFH…HIKVDVDVLE (69 aa). A disordered region spans residues 224-263; sequence KPKGSEANHQRRNSNKSKDYRDNKNKQFNKNHQNQQPAKE. Positions 239–248 are enriched in basic and acidic residues; that stretch reads KSKDYRDNKN. Low complexity predominate over residues 249–263; it reads KQFNKNHQNQQPAKE.

This sequence belongs to the universal ribosomal protein uS3 family. As to quaternary structure, part of the 30S ribosomal subunit. Forms a tight complex with proteins S10 and S14.

In terms of biological role, binds the lower part of the 30S subunit head. Binds mRNA in the 70S ribosome, positioning it for translation. The protein is Small ribosomal subunit protein uS3 of Mycoplasmoides gallisepticum (strain R(low / passage 15 / clone 2)) (Mycoplasma gallisepticum).